We begin with the raw amino-acid sequence, 655 residues long: p-hydroxybenzoic acid efflux pump subunit AaeB (655 aa).

Over 1-12 the chain is Periplasmic; that stretch reads MDIFSIANQHIR. A helical membrane pass occupies residues 13-33; that stretch reads FAVKLATAIVLALFVGFHFQL. Residues 34-37 lie on the Cytoplasmic side of the membrane; that stretch reads ETPR. Residues 38–58 traverse the membrane as a helical segment; that stretch reads WAVLTAAIVAAGPAFAAGGEP. Over 59–68 the chain is Periplasmic; that stretch reads YSGAIRYRGF. The chain crosses the membrane as a helical span at residues 69–89; the sequence is LRIIGTFIGCIAGLVIIIAMI. Over 90-92 the chain is Cytoplasmic; it reads RAP. A helical transmembrane segment spans residues 93 to 113; the sequence is LLMILVCCIWAGFCTWISSLV. The Periplasmic segment spans residues 114-120; that stretch reads RIENSYA. The chain crosses the membrane as a helical span at residues 121-141; the sequence is WGLAGYTALIIVITIQPEPLL. The Cytoplasmic portion of the chain corresponds to 142–151; the sequence is TPQFAVERCS. The chain crosses the membrane as a helical span at residues 152–172; the sequence is EIVIGIVCAIMADLLFSPRSI. The Periplasmic portion of the chain corresponds to 173–369; it reads KQEVDRELES…RTTLSCILGT (197 aa). The chain crosses the membrane as a helical span at residues 370 to 390; the sequence is LFWLWTGWTSGSGAMVMIAVV. The Cytoplasmic portion of the chain corresponds to 391 to 406; sequence TSLAMRLPNPRMVAID. Residues 407 to 427 form a helical membrane-spanning segment; it reads FIYGTLAALPLGLLYFLVIIP. Residues 428–430 lie on the Periplasmic side of the membrane; it reads NTQ. A helical transmembrane segment spans residues 431–451; it reads QSMLLLCISLAVLGFFLGIEV. The Cytoplasmic portion of the chain corresponds to 452 to 458; it reads QKRRLGS. A helical membrane pass occupies residues 459–479; that stretch reads MGALASTINIIVLDNPMTFHF. Topologically, residues 480–481 are periplasmic; sequence SQ. A helical membrane pass occupies residues 482 to 502; the sequence is FLDSALGQIVGCVLAFTVILL. Residues 503 to 655 lie on the Cytoplasmic side of the membrane; the sequence is VRDKSRDRTG…HKYQHALTDS (153 aa).

Belongs to the aromatic acid exporter ArAE (TC 2.A.85) family.

It is found in the cell inner membrane. In terms of biological role, forms an efflux pump with AaeA. Could function as a metabolic relief valve, allowing to eliminate certain compounds when they accumulate to high levels in the cell. The sequence is that of p-hydroxybenzoic acid efflux pump subunit AaeB from Escherichia coli O157:H7.